The following is a 1905-amino-acid chain: Microtubule cross-linking factor 1 (1905 aa).

Positions M1–A249 are necessary for colocalization and binding with microtubules. Residues M1–P329 form a disordered region. The necessary for self-assembly, microtubule bundling activity and apicobasal microtubule organization stretch occupies residues M1 to Q508. Residues Q22 to R40 are compositionally biased toward basic residues. Composition is skewed to low complexity over residues V63–G95 and A115–R130. S77 and S87 each carry phosphoserine. Phosphoserine occurs at positions 217, 221, and 263. Positions A268 to R283 are enriched in low complexity. Coiled-coil stretches lie at residues A330–S404, S432–K483, and K513–E718. Disordered stretches follow at residues Y544–R563, D601–S631, F671–L694, L737–C800, and A842–Q867. Phosphoserine is present on S549. The segment covering D601 to A616 has biased composition (basic and acidic residues). S618 carries the phosphoserine modification. A Phosphothreonine modification is found at T621. Gly residues predominate over residues L680–A692. S685 is modified (phosphoserine). Residues S741 to G770 show a composition bias toward basic and acidic residues. S776 is modified (phosphoserine). The span at G857 to Q866 shows a compositional bias: acidic residues. A phosphoserine mark is found at S901, S923, K941, and T975. The disordered stretch occupies residues G1080–F1100. 2 coiled-coil regions span residues K1143 to S1201 and E1238 to S1278. The interval E1265–R1382 is necessary for interaction with MARK2 and apicobasal microtubule bundle formation in polarized epithelial cells. A Phosphoserine modification is found at S1278. Residues A1346 to V1384 form a disordered region. Positions P1356 to K1377 are enriched in basic and acidic residues. A phosphoserine mark is found at S1385, S1388, and S1399. At T1417 the chain carries Phosphothreonine. S1421 carries the phosphoserine modification. Y1427 carries the phosphotyrosine modification. The disordered stretch occupies residues D1485 to E1505. S1514, S1523, S1561, S1578, S1583, S1592, and S1661 each carry phosphoserine. Residues I1524 to V1569 form a disordered region. Disordered regions lie at residues G1655–V1689, P1707–T1756, G1782–G1842, and K1863–L1905. 2 positions are modified to phosphothreonine: T1667 and T1675. Residues S1678–R1687 are compositionally biased toward low complexity. Residues S1678–P1773 form a necessary for colocalization and binding with microtubules region. S1679 and S1683 each carry phosphoserine. The segment covering A1744–T1756 has biased composition (polar residues). Phosphoserine is present on residues S1791, S1808, S1812, and S1814.

Belongs to the SOGA family. Homodimer. Associates (via N- and C-terminus domains) with microtubule filaments. As to quaternary structure, interacts with MARK2; the interaction is direct. In terms of processing, phosphorylated during mitosis in a CDK1-dependent manner.

It is found in the lateral cell membrane. Its subcellular location is the apical cell membrane. It localises to the cytoplasm. The protein resides in the cytoskeleton. The protein localises to the spindle pole. It is found in the midbody. In terms of biological role, microtubule-associated factor involved in the late phase of epithelial polarization and microtubule dynamics regulation. Plays a role in the development and maintenance of non-centrosomal microtubule bundles at the lateral membrane in polarized epithelial cells. Required for faithful chromosome segregation during mitosis. In Homo sapiens (Human), this protein is Microtubule cross-linking factor 1 (MTCL1).